The sequence spans 224 residues: Urease accessory protein UreF (224 aa).

This sequence belongs to the UreF family. UreD, UreF and UreG form a complex that acts as a GTP-hydrolysis-dependent molecular chaperone, activating the urease apoprotein by helping to assemble the nickel containing metallocenter of UreC. The UreE protein probably delivers the nickel.

The protein resides in the cytoplasm. Functionally, required for maturation of urease via the functional incorporation of the urease nickel metallocenter. The chain is Urease accessory protein UreF from Enterobacter sp. (strain 638).